The following is a 418-amino-acid chain: Gamma-glutamyl phosphate reductase (418 aa).

It belongs to the gamma-glutamyl phosphate reductase family.

The protein resides in the cytoplasm. The catalysed reaction is L-glutamate 5-semialdehyde + phosphate + NADP(+) = L-glutamyl 5-phosphate + NADPH + H(+). It functions in the pathway amino-acid biosynthesis; L-proline biosynthesis; L-glutamate 5-semialdehyde from L-glutamate: step 2/2. Its function is as follows. Catalyzes the NADPH-dependent reduction of L-glutamate 5-phosphate into L-glutamate 5-semialdehyde and phosphate. The product spontaneously undergoes cyclization to form 1-pyrroline-5-carboxylate. This chain is Gamma-glutamyl phosphate reductase, found in Aliivibrio fischeri (strain MJ11) (Vibrio fischeri).